The sequence spans 420 residues: 2',3'-cyclic-nucleotide 3'-phosphodiesterase (420 aa).

The residue at position 9 (Ser-9) is a Phosphoserine. Tyr-110 is modified (phosphotyrosine). Phosphoserine occurs at positions 169, 227, and 239. The active-site Proton acceptor is His-250. Residue Thr-252 coordinates substrate. The residue at position 262 (Thr-262) is a Phosphothreonine. Residue His-329 is the Proton donor of the active site. Thr-331 lines the substrate pocket. Phosphoserine is present on Ser-358. The residue at position 417 (Cys-417) is a Cysteine methyl ester. The S-farnesyl cysteine moiety is linked to residue Cys-417. Positions 418–420 (TII) are cleaved as a propeptide — removed in mature form.

The protein belongs to the 2H phosphoesterase superfamily. CNPase family. As to quaternary structure, exists as monomers and homodimers.

It is found in the membrane. The protein resides in the melanosome. The enzyme catalyses a nucleoside 2',3'-cyclic phosphate + H2O = a nucleoside 2'-phosphate + H(+). Its function is as follows. Catalyzes the formation of 2'-nucleotide products from 2',3'-cyclic substrates. May participate in RNA metabolism in the myelinating cell, CNP is the third most abundant protein in central nervous system myelin. This chain is 2',3'-cyclic-nucleotide 3'-phosphodiesterase, found in Rattus norvegicus (Rat).